An 840-amino-acid polypeptide reads, in one-letter code: Translation initiation factor IF-2 (840 aa).

Residues 95 to 143 are compositionally biased toward basic and acidic residues; that stretch reads RSPDEIEAERQRELEEQRAAEEAERLKAEEAAARQRAEEEARKAEEAAR. 2 disordered regions span residues 95-155 and 172-256; these read RSPD…ATAG and KPAA…PTGP. Residues 144 to 155 are compositionally biased toward low complexity; that stretch reads AKAAQEAAATAG. Composition is skewed to basic and acidic residues over residues 175–191 and 223–232; these read AVEE…PKRD and STDEESDGYR. Residues 233–247 show a composition bias toward basic residues; the sequence is RGGRGGKSKLKKRNQ. The region spanning 340-509 is the tr-type G domain; sequence TRAPVVTVMG…LLQAEVLELK (170 aa). The segment at 349–356 is G1; that stretch reads GHVDHGKT. Residue 349–356 participates in GTP binding; sequence GHVDHGKT. The G2 stretch occupies residues 374-378; it reads GITQH. The tract at residues 395 to 398 is G3; that stretch reads DTPG. Residues 395–399 and 449–452 each bind GTP; these read DTPGH and NKID. The G4 stretch occupies residues 449–452; the sequence is NKID. Positions 485–487 are G5; that stretch reads SAK.

It belongs to the TRAFAC class translation factor GTPase superfamily. Classic translation factor GTPase family. IF-2 subfamily.

The protein resides in the cytoplasm. In terms of biological role, one of the essential components for the initiation of protein synthesis. Protects formylmethionyl-tRNA from spontaneous hydrolysis and promotes its binding to the 30S ribosomal subunits. Also involved in the hydrolysis of GTP during the formation of the 70S ribosomal complex. This Pseudomonas aeruginosa (strain LESB58) protein is Translation initiation factor IF-2.